Consider the following 357-residue polypeptide: Peptide chain release factor 1 (357 aa).

N5-methylglutamine is present on Gln-235.

This sequence belongs to the prokaryotic/mitochondrial release factor family. Methylated by PrmC. Methylation increases the termination efficiency of RF1.

The protein localises to the cytoplasm. Its function is as follows. Peptide chain release factor 1 directs the termination of translation in response to the peptide chain termination codons UAG and UAA. The sequence is that of Peptide chain release factor 1 from Alkaliphilus metalliredigens (strain QYMF).